Consider the following 623-residue polypeptide: Glutamyl-tRNA(Gln) amidotransferase subunit E (623 aa).

This sequence belongs to the GatB/GatE family. GatE subfamily. As to quaternary structure, heterodimer of GatD and GatE.

It carries out the reaction L-glutamyl-tRNA(Gln) + L-glutamine + ATP + H2O = L-glutaminyl-tRNA(Gln) + L-glutamate + ADP + phosphate + H(+). Allows the formation of correctly charged Gln-tRNA(Gln) through the transamidation of misacylated Glu-tRNA(Gln) in organisms which lack glutaminyl-tRNA synthetase. The reaction takes place in the presence of glutamine and ATP through an activated gamma-phospho-Glu-tRNA(Gln). The GatDE system is specific for glutamate and does not act on aspartate. This is Glutamyl-tRNA(Gln) amidotransferase subunit E from Haloarcula marismortui (strain ATCC 43049 / DSM 3752 / JCM 8966 / VKM B-1809) (Halobacterium marismortui).